The sequence spans 216 residues: Thylakoid lumenal 16.5 kDa protein, chloroplastic (216 aa).

The N-terminal 38 residues, 1 to 38, are a transit peptide targeting the chloroplast; the sequence is MAKSLLCSSTLNPFFSTTLSSSKKNQIAYSGNSKNQTS. Residues 39-73 constitute a thylakoid transit peptide; that stretch reads SSLLWKRRELSLGFMSSLVAIGLVSNDRRRHDANA.

Its subcellular location is the plastid. It is found in the chloroplast thylakoid lumen. The chain is Thylakoid lumenal 16.5 kDa protein, chloroplastic from Arabidopsis thaliana (Mouse-ear cress).